We begin with the raw amino-acid sequence, 361 residues long: uncharacterized protein (361 aa).

Residues 1–19 (MNLVICVLLLSIWKNNCMT) form the signal peptide. Topologically, residues 20–47 (TNQTNGSSTTGDKPVESMQTKLNYLRRN) are extracellular. Asn24 carries N-linked (GlcNAc...) asparagine glycosylation. The chain crosses the membrane as a helical span at residues 48-68 (LLILVGIIIMVFVFICFCYLH). The Cytoplasmic portion of the chain corresponds to 69 to 361 (YNCLSDDASK…QVTSEVTLND (293 aa)). The segment covering 99 to 113 (AKTASQCSPETQPML) has biased composition (polar residues). Disordered regions lie at residues 99 to 184 (AKTA…KAHK), 209 to 247 (PPQL…NPKR), and 295 to 316 (QNLH…LDSR). Low complexity predominate over residues 114–133 (STADKSSDSSSPERASAQSS). Over residues 141–150 (SSLQKPSIPN) the composition is skewed to polar residues. Residues 299–308 (VSSKVKSSSR) are compositionally biased toward low complexity.

The protein resides in the membrane. This is an uncharacterized protein from Homo sapiens (Human).